A 591-amino-acid chain; its full sequence is 2-succinyl-5-enolpyruvyl-6-hydroxy-3-cyclohexene-1-carboxylate synthase (591 aa).

This sequence belongs to the TPP enzyme family. MenD subfamily. In terms of assembly, homodimer. Mg(2+) is required as a cofactor. It depends on Mn(2+) as a cofactor. Requires thiamine diphosphate as cofactor.

The enzyme catalyses isochorismate + 2-oxoglutarate + H(+) = 5-enolpyruvoyl-6-hydroxy-2-succinyl-cyclohex-3-ene-1-carboxylate + CO2. Its pathway is quinol/quinone metabolism; 1,4-dihydroxy-2-naphthoate biosynthesis; 1,4-dihydroxy-2-naphthoate from chorismate: step 2/7. It participates in quinol/quinone metabolism; menaquinone biosynthesis. Functionally, catalyzes the thiamine diphosphate-dependent decarboxylation of 2-oxoglutarate and the subsequent addition of the resulting succinic semialdehyde-thiamine pyrophosphate anion to isochorismate to yield 2-succinyl-5-enolpyruvyl-6-hydroxy-3-cyclohexene-1-carboxylate (SEPHCHC). This Salinibacter ruber (strain DSM 13855 / M31) protein is 2-succinyl-5-enolpyruvyl-6-hydroxy-3-cyclohexene-1-carboxylate synthase.